We begin with the raw amino-acid sequence, 211 residues long: Thymidylate kinase (211 aa).

An ATP-binding site is contributed by glycine 11 to threonine 18.

It belongs to the thymidylate kinase family.

The enzyme catalyses dTMP + ATP = dTDP + ADP. Functionally, phosphorylation of dTMP to form dTDP in both de novo and salvage pathways of dTTP synthesis. The protein is Thymidylate kinase of Streptococcus uberis (strain ATCC BAA-854 / 0140J).